The sequence spans 502 residues: Maturase K (502 aa).

It belongs to the intron maturase 2 family. MatK subfamily.

The protein localises to the plastid. It localises to the chloroplast. Functionally, usually encoded in the trnK tRNA gene intron. Probably assists in splicing its own and other chloroplast group II introns. The polypeptide is Maturase K (Ehretia anacua (Sandpaper tree)).